We begin with the raw amino-acid sequence, 344 residues long: N-acetyl-gamma-glutamyl-phosphate reductase (344 aa).

Residue Cys-150 is part of the active site.

It belongs to the NAGSA dehydrogenase family. Type 1 subfamily.

It is found in the cytoplasm. The enzyme catalyses N-acetyl-L-glutamate 5-semialdehyde + phosphate + NADP(+) = N-acetyl-L-glutamyl 5-phosphate + NADPH + H(+). Its pathway is amino-acid biosynthesis; L-arginine biosynthesis; N(2)-acetyl-L-ornithine from L-glutamate: step 3/4. In terms of biological role, catalyzes the NADPH-dependent reduction of N-acetyl-5-glutamyl phosphate to yield N-acetyl-L-glutamate 5-semialdehyde. The protein is N-acetyl-gamma-glutamyl-phosphate reductase of Pseudomonas fluorescens (strain Pf0-1).